Here is a 244-residue protein sequence, read N- to C-terminus: High frequency lysogenization protein HflD homolog (244 aa).

Belongs to the HflD family.

It localises to the cytoplasm. Its subcellular location is the cell inner membrane. The protein is High frequency lysogenization protein HflD homolog of Acinetobacter baumannii (strain SDF).